The chain runs to 75 residues: Small ribosomal subunit protein bS18c (75 aa).

It belongs to the bacterial ribosomal protein bS18 family. As to quaternary structure, part of the 30S ribosomal subunit.

The protein localises to the plastid. The protein resides in the chloroplast. This is Small ribosomal subunit protein bS18c from Adiantum capillus-veneris (Maidenhair fern).